A 396-amino-acid chain; its full sequence is Obg-like ATPase 1 (396 aa).

The OBG-type G domain maps to 23–283 (LKIGIVGLPN…MSAEEKQKYL (261 aa)). Residue 32–37 (NVGKST) participates in ATP binding. Mg(2+) contacts are provided by serine 36 and threonine 56. Leucine 231 provides a ligand contact to ATP. A Nuclear export signal motif is present at residues 267–274 (LELKLQDM). The TGS domain maps to 304-387 (QLEYFFTAGP…EDGDIIFFKF (84 aa)).

The protein belongs to the TRAFAC class OBG-HflX-like GTPase superfamily. OBG GTPase family. YchF/OLA1 subfamily. In terms of assembly, monomer. The cofactor is Mg(2+).

It is found in the cytoplasm. The protein resides in the nucleus. Its subcellular location is the nucleolus. Hydrolyzes ATP, and can also hydrolyze GTP with lower efficiency. Has lower affinity for GTP. This chain is Obg-like ATPase 1, found in Gallus gallus (Chicken).